The primary structure comprises 508 residues: CBL-interacting protein kinase 19 (508 aa).

The tract at residues Met1 to Ala24 is disordered. A compositionally biased stretch (low complexity) spans Leu14–Ala24. The Protein kinase domain maps to Tyr37–Phe291. ATP contacts are provided by residues Leu43–Val51 and Lys66. The active-site Proton acceptor is the Asp159. The segment at Asp177–Glu206 is activation loop. Residues Ala311–Ser372 form a disordered region. Residues Gly313–Pro322 are compositionally biased toward acidic residues. Positions Ser323–Gln337 are enriched in pro residues. Acidic residues predominate over residues Gln338–Trp347. The 45-residue stretch at Ala354–Glu398 folds into the NAF domain. The PPI stretch occupies residues Gly401–Val430.

Belongs to the protein kinase superfamily. CAMK Ser/Thr protein kinase family. SNF1 subfamily. Requires Mn(2+) as cofactor. Autophosphorylated. As to expression, expressed in roots, leaf blades and sheaths and panicles.

The catalysed reaction is L-seryl-[protein] + ATP = O-phospho-L-seryl-[protein] + ADP + H(+). The enzyme catalyses L-threonyl-[protein] + ATP = O-phospho-L-threonyl-[protein] + ADP + H(+). CIPK serine-threonine protein kinases interact with CBL proteins. Binding of a CBL protein to the regulatory NAF domain of CIPK protein lead to the activation of the kinase in a calcium-dependent manner. The sequence is that of CBL-interacting protein kinase 19 (CIPK19) from Oryza sativa subsp. japonica (Rice).